A 148-amino-acid polypeptide reads, in one-letter code: MATSDIQVKELEKRASGQAFELILGPRSKEAAPEFPLSPPKKKDLSLEEIQKKLEAAEERRKSHEAEVLKQLAEKREHEKEVLQKAIEENNNFSKMAEEKLTHKMEANKENREAQMAAKLERLREKDKHIEEVRKNKEGKDPGEAETN.

The SLD domain maps to 4 to 145 (SDIQVKELEK…NKEGKDPGEA (142 aa)). Residue Ser16 is modified to Phosphoserine; by PKA. The residue at position 38 (Ser38) is a Phosphoserine; by CDK1. Positions 41–140 (KKKDLSLEEI…EEVRKNKEGK (100 aa)) form a coiled coil. At Ser63 the chain carries Phosphoserine; by PKA. The disordered stretch occupies residues 122–148 (RLREKDKHIEEVRKNKEGKDPGEAETN).

It belongs to the stathmin family. As to quaternary structure, binds to two alpha/beta-tubulin heterodimers. In terms of processing, many different phosphorylated forms are observed depending on specific combinations among the sites which can be phosphorylated. MAPK is responsible for the phosphorylation of stathmin in response to NGF.

The protein localises to the cytoplasm. Its subcellular location is the cytoskeleton. In terms of biological role, involved in the regulation of the microtubule (MT) filament system by destabilizing microtubules. It prevents assembly and promotes disassembly of microtubules. In Gallus gallus (Chicken), this protein is Stathmin (STMN1).